A 96-amino-acid polypeptide reads, in one-letter code: uncharacterized protein (96 aa).

Transmembrane regions (helical) follow at residues 3-23 (KLTI…QLFA), 30-50 (TLGN…LASI), and 68-88 (IGLL…IIII).

It localises to the cell membrane. This is an uncharacterized protein from Bacillus subtilis (strain 168).